Reading from the N-terminus, the 125-residue chain is Small ribosomal subunit protein uS13 (125 aa).

It belongs to the universal ribosomal protein uS13 family. As to quaternary structure, part of the 30S ribosomal subunit. Forms a loose heterodimer with protein S19. Forms two bridges to the 50S subunit in the 70S ribosome.

Located at the top of the head of the 30S subunit, it contacts several helices of the 16S rRNA. In the 70S ribosome it contacts the 23S rRNA (bridge B1a) and protein L5 of the 50S subunit (bridge B1b), connecting the 2 subunits; these bridges are implicated in subunit movement. Contacts the tRNAs in the A and P-sites. The chain is Small ribosomal subunit protein uS13 from Orientia tsutsugamushi (strain Ikeda) (Rickettsia tsutsugamushi).